Consider the following 398-residue polypeptide: Thyrotropin-releasing hormone receptor (398 aa).

Residues 1 to 28 lie on the Extracellular side of the membrane; that stretch reads MENETGSELNQTQLQPRAVVALEYQVVT. Asn-3 and Asn-10 each carry an N-linked (GlcNAc...) asparagine glycan. Residues 29 to 51 form a helical membrane-spanning segment; it reads ILLVLIICGLGIVGNIMVVLVVM. Residues 52–61 lie on the Cytoplasmic side of the membrane; sequence RTKHMRTPTN. A helical membrane pass occupies residues 62–83; sequence CYLVSLAVADLMVLVAAGLPNI. The Extracellular segment spans residues 84–99; it reads TDSIYGSWVYGYVGCL. Cys-98 and Cys-179 form a disulfide bridge. Residues 100–121 form a helical membrane-spanning segment; that stretch reads CITYLQYLGINASSCSITAFTI. Topologically, residues 122–144 are cytoplasmic; that stretch reads ERYIAICHPIKAQFLCTFSRAKK. The helical transmembrane segment at 145–168 threads the bilayer; that stretch reads IIIFVWAFTSIYCMLWFFLLDLNI. Over 169–193 the chain is Extracellular; it reads STYKDAIVVSCGYKISRNYYSPIYL. The chain crosses the membrane as a helical span at residues 194-215; it reads MDFGVFYVVPMILATVLYGFIA. The Cytoplasmic portion of the chain corresponds to 216–266; the sequence is RILFLNPIPSDPKENSNMWKNDSTHQNKNLNSKTSNRYFNSTVSSRKQVTK. Residues 267 to 288 traverse the membrane as a helical segment; it reads MLAVVVILFALLWMPYRTLVVV. At 289-296 the chain is on the extracellular side; sequence NSFLSSPF. Residues 297–319 form a helical membrane-spanning segment; that stretch reads QENWFLLFCRICIYLNSAINPVI. Over 320–398 the chain is Cytoplasmic; that stretch reads YNLMSQKFRA…LASEITFNQS (79 aa).

This sequence belongs to the G-protein coupled receptor 1 family.

Its subcellular location is the cell membrane. In terms of biological role, receptor for thyrotropin-releasing hormone (TRH). Upon ligand binding, this G-protein-coupled receptor triggers activation of the phosphatidylinositol (IP3)-calcium-protein kinase C (PKC) pathway. The protein is Thyrotropin-releasing hormone receptor (TRHR) of Bos taurus (Bovine).